The sequence spans 763 residues: Xaa-Pro dipeptidyl-peptidase (763 aa).

Catalysis depends on charge relay system residues Ser-348, Asp-468, and His-498.

It belongs to the peptidase S15 family. Homodimer.

It localises to the cytoplasm. It catalyses the reaction Hydrolyzes Xaa-Pro-|- bonds to release unblocked, N-terminal dipeptides from substrates including Ala-Pro-|-p-nitroanilide and (sequentially) Tyr-Pro-|-Phe-Pro-|-Gly-Pro-|-Ile.. In terms of biological role, removes N-terminal dipeptides sequentially from polypeptides having unsubstituted N-termini provided that the penultimate residue is proline. This Lactococcus lactis subsp. cremoris (strain SK11) protein is Xaa-Pro dipeptidyl-peptidase.